Reading from the N-terminus, the 153-residue chain is Arginine repressor (153 aa).

It belongs to the ArgR family.

Its subcellular location is the cytoplasm. Its pathway is amino-acid biosynthesis; L-arginine biosynthesis [regulation]. In terms of biological role, regulates arginine biosynthesis genes. In Actinobacillus pleuropneumoniae serotype 3 (strain JL03), this protein is Arginine repressor.